A 156-amino-acid polypeptide reads, in one-letter code: Small ribosomal subunit protein uS7 (156 aa).

This sequence belongs to the universal ribosomal protein uS7 family. As to quaternary structure, part of the 30S ribosomal subunit. Contacts proteins S9 and S11.

Functionally, one of the primary rRNA binding proteins, it binds directly to 16S rRNA where it nucleates assembly of the head domain of the 30S subunit. Is located at the subunit interface close to the decoding center, probably blocks exit of the E-site tRNA. This Hahella chejuensis (strain KCTC 2396) protein is Small ribosomal subunit protein uS7.